The chain runs to 474 residues: Proline--tRNA ligase (474 aa).

This sequence belongs to the class-II aminoacyl-tRNA synthetase family. ProS type 3 subfamily. In terms of assembly, homodimer.

It localises to the cytoplasm. It carries out the reaction tRNA(Pro) + L-proline + ATP = L-prolyl-tRNA(Pro) + AMP + diphosphate. Functionally, catalyzes the attachment of proline to tRNA(Pro) in a two-step reaction: proline is first activated by ATP to form Pro-AMP and then transferred to the acceptor end of tRNA(Pro). This Mycoplasma capricolum subsp. capricolum (strain California kid / ATCC 27343 / NCTC 10154) protein is Proline--tRNA ligase.